A 258-amino-acid polypeptide reads, in one-letter code: 3-deoxy-manno-octulosonate cytidylyltransferase (258 aa).

It belongs to the KdsB family.

The protein resides in the cytoplasm. It carries out the reaction 3-deoxy-alpha-D-manno-oct-2-ulosonate + CTP = CMP-3-deoxy-beta-D-manno-octulosonate + diphosphate. It participates in nucleotide-sugar biosynthesis; CMP-3-deoxy-D-manno-octulosonate biosynthesis; CMP-3-deoxy-D-manno-octulosonate from 3-deoxy-D-manno-octulosonate and CTP: step 1/1. Its pathway is bacterial outer membrane biogenesis; lipopolysaccharide biosynthesis. Activates KDO (a required 8-carbon sugar) for incorporation into bacterial lipopolysaccharide in Gram-negative bacteria. The chain is 3-deoxy-manno-octulosonate cytidylyltransferase from Nitrobacter hamburgensis (strain DSM 10229 / NCIMB 13809 / X14).